The primary structure comprises 663 residues: Protein MNE1 (663 aa).

The protein is Protein MNE1 (MNE1) of Saccharomyces cerevisiae (strain ATCC 204508 / S288c) (Baker's yeast).